Reading from the N-terminus, the 497-residue chain is Glycerol kinase (497 aa).

T12 contacts ADP. Residues T12, T13, and S14 each coordinate ATP. T12 contacts sn-glycerol 3-phosphate. Residue R16 participates in ADP binding. The sn-glycerol 3-phosphate site is built by R82, E83, Y134, and D243. The glycerol site is built by R82, E83, Y134, D243, and Q244. Residues T265 and G308 each contribute to the ADP site. ATP is bound by residues T265, G308, Q312, and G411. An ADP-binding site is contributed by G411.

It belongs to the FGGY kinase family.

The enzyme catalyses glycerol + ATP = sn-glycerol 3-phosphate + ADP + H(+). It participates in polyol metabolism; glycerol degradation via glycerol kinase pathway; sn-glycerol 3-phosphate from glycerol: step 1/1. Its activity is regulated as follows. Inhibited by fructose 1,6-bisphosphate (FBP). Key enzyme in the regulation of glycerol uptake and metabolism. Catalyzes the phosphorylation of glycerol to yield sn-glycerol 3-phosphate. This Sinorhizobium fredii (strain NBRC 101917 / NGR234) protein is Glycerol kinase.